The following is a 451-amino-acid chain: Probable V-type proton ATPase subunit H 1 (451 aa).

This sequence belongs to the V-ATPase H subunit family. In terms of assembly, V-ATPase is a heteromultimeric enzyme made up of two complexes: the ATP-hydrolytic V1 complex and the proton translocation V0 complex. The V1 complex consists of three catalytic AB heterodimers that form a heterohexamer, three peripheral stalks each consisting of EG heterodimers, one central rotor including subunits D and F, and the regulatory subunits C and H. The proton translocation complex V0 consists of the proton transport subunit a, a ring of proteolipid subunits c9c'', rotary subunit d, subunits e and f, and the accessory subunits vah-19/Ac45 and vah-20/PRR.

Subunit of the V1 complex of vacuolar(H+)-ATPase (V-ATPase), a multisubunit enzyme composed of a peripheral complex (V1) that hydrolyzes ATP and a membrane integral complex (V0) that translocates protons. V-ATPase is responsible for acidifying and maintaining the pH of intracellular compartments and in some cell types, is targeted to the plasma membrane, where it is responsible for acidifying the extracellular environment. Subunit H is essential for V-ATPase activity, but not for the assembly of the complex. The chain is Probable V-type proton ATPase subunit H 1 from Caenorhabditis elegans.